The chain runs to 550 residues: Calcyphosin-2 (550 aa).

Disordered regions lie at residues 1-20 and 175-198; these read MVPP…DNFS and ISDP…DSER. Residues 181 to 190 show a composition bias toward polar residues; it reads DLNTKNQESS. EF-hand domains lie at 379–414, 415–452, and 453–488; these read RILT…FHLE, VSEQ…EMNE, and YRKS…KKHP. Ca(2+) contacts are provided by Asp466, Asn468, Thr470, and Asp477.

This Mus musculus (Mouse) protein is Calcyphosin-2 (Caps2).